A 458-amino-acid chain; its full sequence is Purple acid phosphatase 23 (458 aa).

Residues 1-19 (MTLLIMITLTSISLLLAAA) form the signal peptide. Asn59, Asn121, and Asn136 each carry an N-linked (GlcNAc...) asparagine glycan. Position 194 (Asp194) interacts with Fe cation. The N-linked (GlcNAc...) asparagine glycan is linked to Asn200. Fe cation-binding residues include Asp221 and Tyr224. Residue Asp221 participates in Mn(2+) binding. Asn278 contributes to the Mn(2+) binding site. Asn278 is a substrate binding site. N-linked (GlcNAc...) asparagine glycosylation is present at Asn331. Position 360 (His360) interacts with Mn(2+). The active-site Proton donor is His370. A Mn(2+)-binding site is contributed by His397. 397 to 399 (HVH) lines the substrate pocket. His399 is a binding site for Fe cation. Asn409 and Asn455 each carry an N-linked (GlcNAc...) asparagine glycan.

This sequence belongs to the metallophosphoesterase superfamily. Purple acid phosphatase family. As to quaternary structure, homodimer. Fe cation serves as cofactor. The cofactor is Mn(2+). In terms of tissue distribution, specifically expressed in flowers.

It is found in the secreted. It carries out the reaction a phosphate monoester + H2O = an alcohol + phosphate. Functionally, acid phosphatase activity with ATP, ADP, dATP, pyrophosphate, polyphosphate, phosphoserine and phosphothreonine. Low or no activity with phosphotyrosine, AMP and phytate. This is Purple acid phosphatase 23 (PAP23) from Arabidopsis thaliana (Mouse-ear cress).